The following is a 171-amino-acid chain: uncharacterized protein (171 aa).

This is an uncharacterized protein from Saccharomyces cerevisiae (strain ATCC 204508 / S288c) (Baker's yeast).